We begin with the raw amino-acid sequence, 735 residues long: 2-5A-dependent ribonuclease (735 aa).

The tract at residues 1 to 21 is disordered; it reads METPDYNTPQGGTPSAGSQRT. ANK repeat units lie at residues 24 to 53, 58 to 87, 91 to 120, 124 to 153, 167 to 197, 201 to 234, 238 to 268, 272 to 301, and 303 to 328; these read EDDS…DANA, WGWT…DPHR, NGAT…DVNE, NGFT…NVNL, GGAT…EVDA, MGRN…DVNV, RGKT…NIDA, EGKT…DKCD, and LVWI…NPDT. Residues 26–51 are binding to TMEV Leader protein; that stretch reads DSSLIKAVQKGDVVRVQQLLEKGADA. 2-5A binding (P-loop) stretches follow at residues 229–242 and 253–275; these read GADV…GKTP and GLVQ…EGKT. A Protein kinase domain is found at 364 to 584; it reads IHDDYKIAGT…LVDLLGHPFF (221 aa). A C6-type zinc finger spans residues 401–436; that stretch reads CKEVSCLRDCGDHSNLVAFYGREDDKGCLYVCVSLC. Residues 587-722 form the KEN domain; the sequence is WENRYRTLRN…KHFPQPPPRL (136 aa). Positions 714 to 735 are disordered; the sequence is HFPQPPPRLSVPEAVGPGGIQS.

It belongs to the protein kinase superfamily. As to quaternary structure, (Microbial infection) Interacts (via N-terminus) with TMEV leader protein; this interaction prevents RNASEL activation by its substrate 2'-5' oligoadenylates. In terms of assembly, monomer (inactive form) or homodimer. Interacts with ABCE1; this interaction inhibits the RNASEL. The cofactor is Mn(2+). Mg(2+) is required as a cofactor. Expressed in spleen, thymus, lung, testis, kidney, liver and heart.

The protein localises to the cytoplasm. Its subcellular location is the mitochondrion. Its activity is regulated as follows. After binding to 2-5A (5'-phosphorylated 2',5'-linked oligoadenylates) the homodimerization and subsequent activation occurs. Inhibited by RNASEL inhibitor ABCE1/RLI, a cytoplasmic member of the ATP-binding cassette (ABC) transporter family. Functionally, endoribonuclease that functions in the interferon (IFN) antiviral response. In INF treated and virus infected cells, RNASEL probably mediates its antiviral effects through a combination of direct cleavage of single-stranded viral RNAs, inhibition of protein synthesis through the degradation of rRNA, induction of apoptosis, and induction of other antiviral genes. RNASEL mediated apoptosis is the result of a JNK-dependent stress-response pathway leading to cytochrome c release from mitochondria and caspase-dependent apoptosis. Therefore, activation of RNASEL could lead to elimination of virus infected cells under some circumstances. In the crosstalk between autophagy and apoptosis proposed to induce autophagy as an early stress response to small double-stranded RNA and at later stages of prolonged stress to activate caspase-dependent proteolytic cleavage of BECN1 to terminate autophagy and promote apoptosis. Might play a central role in the regulation of mRNA turnover. Cleaves 3' of UpNp dimers, with preference for UU and UA sequences, to sets of discrete products ranging from between 4 and 22 nucleotides in length. This Mus musculus (Mouse) protein is 2-5A-dependent ribonuclease (Rnasel).